Here is a 362-residue protein sequence, read N- to C-terminus: Histidinol-phosphate aminotransferase (362 aa).

K211 carries the post-translational modification N6-(pyridoxal phosphate)lysine.

Belongs to the class-II pyridoxal-phosphate-dependent aminotransferase family. Histidinol-phosphate aminotransferase subfamily. As to quaternary structure, homodimer. It depends on pyridoxal 5'-phosphate as a cofactor.

It carries out the reaction L-histidinol phosphate + 2-oxoglutarate = 3-(imidazol-4-yl)-2-oxopropyl phosphate + L-glutamate. It functions in the pathway amino-acid biosynthesis; L-histidine biosynthesis; L-histidine from 5-phospho-alpha-D-ribose 1-diphosphate: step 7/9. This Serratia proteamaculans (strain 568) protein is Histidinol-phosphate aminotransferase.